A 151-amino-acid polypeptide reads, in one-letter code: Sperm surface protein Sp17 (151 aa).

Residues phenylalanine 68–glutamate 98 show a composition bias toward basic and acidic residues. 2 disordered regions span residues phenylalanine 68–glutamate 115 and alanine 130–lysine 151. The 30-residue stretch at glutamate 114–glutamine 143 folds into the IQ domain.

In terms of assembly, homodimer. May interact with ROPN1. In terms of tissue distribution, testis- and sperm-specific.

It localises to the membrane. Its function is as follows. Sperm surface zona pellucida binding protein. Helps to bind spermatozoa to the zona pellucida with high affinity. Might function in binding zona pellucida and carbohydrates. The chain is Sperm surface protein Sp17 (SPA17) from Macaca fascicularis (Crab-eating macaque).